We begin with the raw amino-acid sequence, 212 residues long: Interleukin-6 (212 aa).

A signal peptide spans M1–P29. Cysteines 72 and 78 form a disulfide. S81 is modified (phosphoserine). A disulfide bridge connects residues C101 and C111. The segment at Q156–L175 is disordered. Positions K163 to L175 are enriched in polar residues.

This sequence belongs to the IL-6 superfamily. Component of a hexamer of two molecules each of IL6, IL6R and IL6ST; first binds to IL6R to associate with the signaling subunit IL6ST. Interacts with IL6R (via the N-terminal ectodomain); this interaction may be affected by IL6R-binding with SORL1, hence decreasing IL6 cis signaling. Interacts with SORL1 (via the N-terminal ectodomain); this interaction leads to IL6 internalization and lysosomal degradation. May form a trimeric complex with the soluble SORL1 ectodomain and soluble IL6R receptor; this interaction might stabilize circulating IL6, hence promoting IL6 trans signaling.

The protein resides in the secreted. Functionally, cytokine with a wide variety of biological functions in immunity, tissue regeneration, and metabolism. Binds to IL6R, then the complex associates to the signaling subunit IL6ST/gp130 to trigger the intracellular IL6-signaling pathway. The interaction with the membrane-bound IL6R and IL6ST stimulates 'classic signaling', whereas the binding of IL6 and soluble IL6R to IL6ST stimulates 'trans-signaling'. Alternatively, 'cluster signaling' occurs when membrane-bound IL6:IL6R complexes on transmitter cells activate IL6ST receptors on neighboring receiver cells. Its function is as follows. IL6 is a potent inducer of the acute phase response. Rapid production of IL6 contributes to host defense during infection and tissue injury, but excessive IL6 synthesis is involved in disease pathology. In the innate immune response, is synthesized by myeloid cells, such as macrophages and dendritic cells, upon recognition of pathogens through toll-like receptors (TLRs) at the site of infection or tissue injury. In the adaptive immune response, is required for the differentiation of B cells into immunoglobulin-secreting cells. Plays a major role in the differentiation of CD4(+) T cell subsets. Essential factor for the development of T follicular helper (Tfh) cells that are required for the induction of germinal-center formation. Required to drive naive CD4(+) T cells to the Th17 lineage. Also required for proliferation of myeloma cells and the survival of plasmablast cells. In terms of biological role, acts as an essential factor in bone homeostasis and on vessels directly or indirectly by induction of VEGF, resulting in increased angiogenesis activity and vascular permeability. Induces, through 'trans-signaling' and synergistically with IL1B and TNF, the production of VEGF. Involved in metabolic controls, is discharged into the bloodstream after muscle contraction increasing lipolysis and improving insulin resistance. 'Trans-signaling' in central nervous system also regulates energy and glucose homeostasis. Mediates, through GLP-1, crosstalk between insulin-sensitive tissues, intestinal L cells and pancreatic islets to adapt to changes in insulin demand. Also acts as a myokine. Plays a protective role during liver injury, being required for maintenance of tissue regeneration. Also has a pivotal role in iron metabolism by regulating HAMP/hepcidin expression upon inflammation or bacterial infection. Through activation of IL6ST-YAP-NOTCH pathway, induces inflammation-induced epithelial regeneration. This chain is Interleukin-6 (IL6), found in Sus scrofa (Pig).